A 537-amino-acid polypeptide reads, in one-letter code: O-phosphoserine--tRNA(Cys) ligase (537 aa).

Substrate is bound by residues 186–188 (HMT), 231–233 (SAS), 273–274 (YY), and N317.

The protein belongs to the class-II aminoacyl-tRNA synthetase family. O-phosphoseryl-tRNA(Cys) synthetase subfamily. Homotetramer. Interacts with SepCysS.

It carries out the reaction tRNA(Cys) + O-phospho-L-serine + ATP = O-phospho-L-seryl-tRNA(Cys) + AMP + diphosphate. In terms of biological role, catalyzes the attachment of O-phosphoserine (Sep) to tRNA(Cys). The chain is O-phosphoserine--tRNA(Cys) ligase from Methanococcus maripaludis (strain C6 / ATCC BAA-1332).